A 416-amino-acid polypeptide reads, in one-letter code: MQVTLKTLQQQTFKIDIDPEETVKALKEKIESEKGKDAFPVAGQKLIYAGKILSDDTALKEYKIDEKNFVVVMVTKPKAVTTAVPATTQPSSTPSPTAVSSSPAVAAAQAPAPTPALPPTSTPASTAPASTTASSEPAPAGATQPEKPAEKPAQTPVLTSPAPADSTPGDSSRSNLFEDATSALVTGQSYENMVTEIMSMGYEREQVIAALRASFNNPDRAVEYLLMGIPGDRESQAVVDPPPQAVSTGTPQSPAVAAAAATTTATTTTTSGGHPLEFLRNQPQFQQMRQIIQQNPSLLPALLQQIGRENPQLLQQISQHQEHFIQMLNEPVQEAGSQGGGGGGGGGGGGGGGGGIAEAGSGHMNYIQVTPQEKEAIERLKALGFPEGLVIQAYFACEKNENLAANFLLQQNFDED.

Positions 1-79 (MQVTLKTLQQ…VVVMVTKPKA (79 aa)) constitute a Ubiquitin-like domain. The segment covering 83–111 (AVPATTQPSSTPSPTAVSSSPAVAAAQAP) has biased composition (low complexity). The disordered stretch occupies residues 83-175 (AVPATTQPSS…STPGDSSRSN (93 aa)). The segment covering 112–121 (APTPALPPTS) has biased composition (pro residues). Low complexity predominate over residues 122 to 143 (TPASTAPASTTASSEPAPAGAT). A Phosphothreonine modification is found at Thr155. 2 positions are modified to phosphoserine: Ser160 and Ser174. Phosphothreonine is present on Thr186. The UBA 1 domain maps to 188 to 228 (QSYENMVTEIMSMGYEREQVIAALRASFNNPDRAVEYLLMG). Ser199 carries the phosphoserine modification. Tyr202 carries the post-translational modification Phosphotyrosine. The 44-residue stretch at 274 to 317 (HPLEFLRNQPQFQQMRQIIQQNPSLLPALLQQIGRENPQLLQQI) folds into the STI1 domain. Residues 333-356 (QEAGSQGGGGGGGGGGGGGGGGGI) are disordered. Over residues 337–356 (SQGGGGGGGGGGGGGGGGGI) the composition is skewed to gly residues. Residues 371–411 (PQEKEAIERLKALGFPEGLVIQAYFACEKNENLAANFLLQQ) form the UBA 2 domain.

This sequence belongs to the RAD23 family. Component of the XPC complex composed of XPC, RAD23B and CETN2. Interacts with NGLY1 and PSMC1. Interacts with ATXN3. Interacts with AMFR. Interacts with VCP; the interaction is indirect and mediated by NGLY1.

The protein localises to the nucleus. It is found in the cytoplasm. In terms of biological role, multiubiquitin chain receptor involved in modulation of proteasomal degradation. Binds to polyubiquitin chains. Proposed to be capable to bind simultaneously to the 26S proteasome and to polyubiquitinated substrates and to deliver ubiquitinated proteins to the proteasome. May play a role in endoplasmic reticulum-associated degradation (ERAD) of misfolded glycoproteins by association with PNGase and delivering deglycosylated proteins to the proteasome. Functionally, involved in global genome nucleotide excision repair (GG-NER) by acting as component of the XPC complex. Cooperatively with Cetn2 appears to stabilize Xpc. May protect Xpc from proteasomal degradation. Its function is as follows. The XPC complex is proposed to represent the first factor bound at the sites of DNA damage and together with other core recognition factors, Xpa, RPA and the TFIIH complex, is part of the pre-incision (or initial recognition) complex. The XPC complex recognizes a wide spectrum of damaged DNA characterized by distortions of the DNA helix such as single-stranded loops, mismatched bubbles or single-stranded overhangs. The orientation of XPC complex binding appears to be crucial for inducing a productive NER. XPC complex is proposed to recognize and to interact with unpaired bases on the undamaged DNA strand which is followed by recruitment of the TFIIH complex and subsequent scanning for lesions in the opposite strand in a 5'-to-3' direction by the NER machinery. Cyclobutane pyrimidine dimers (CPDs) which are formed upon UV-induced DNA damage esacpe detection by the XPC complex due to a low degree of structural perurbation. Instead they are detected by the UV-DDB complex which in turn recruits and cooperates with the XPC complex in the respective DNA repair. In vitro, the Xpc:Rad23b dimer is sufficient to initiate NER; it preferentially binds to cisplatin and UV-damaged double-stranded DNA and also binds to a variety of chemically and structurally diverse DNA adducts. Xpc:Rad23b contacts DNA both 5' and 3' of a cisplatin lesion with a preference for the 5' side. Xpc:Rad23bB induces a bend in DNA upon binding. Xpc:Rad23b stimulates the activity of DNA glycosylases Tdg and Smug1. In Mus musculus (Mouse), this protein is UV excision repair protein RAD23 homolog B (Rad23b).